The sequence spans 292 residues: Protoheme IX farnesyltransferase (292 aa).

The next 8 membrane-spanning stretches (helical) occupy residues 15-35 (YLVL…LGGM), 49-69 (FWTL…NMVI), 104-124 (VFSL…LVAL), 147-167 (IGGI…SGSV), 171-191 (AIAL…VLAL), 218-238 (TLLY…TGLV), 242-262 (YFVV…KFFF), and 271-291 (LFFF…VDMV).

This sequence belongs to the UbiA prenyltransferase family. Protoheme IX farnesyltransferase subfamily.

It is found in the cell inner membrane. It carries out the reaction heme b + (2E,6E)-farnesyl diphosphate + H2O = Fe(II)-heme o + diphosphate. The protein operates within porphyrin-containing compound metabolism; heme O biosynthesis; heme O from protoheme: step 1/1. Converts heme B (protoheme IX) to heme O by substitution of the vinyl group on carbon 2 of heme B porphyrin ring with a hydroxyethyl farnesyl side group. The protein is Protoheme IX farnesyltransferase of Aquifex aeolicus (strain VF5).